The primary structure comprises 220 residues: Riboflavin kinase (220 aa).

Residues 1–92 form an H-T-H motif-like region; it reads MDTSDQYYRA…LSRILSIKSN (92 aa). Residues 93-220 form a riboflavin kinase region; the sequence is IVMTGIVVPG…GDEVTIEVTA (128 aa). Position 102–107 (102–107) interacts with CDP; the sequence is GMGEGK. 2 residues coordinate Mg(2+): T131 and N133. Positions 188 and 195 each coordinate FMN. A CDP-binding site is contributed by 200-203; the sequence is KYLR.

The protein belongs to the archaeal riboflavin kinase family. Mg(2+) serves as cofactor.

The catalysed reaction is riboflavin + CTP = CDP + FMN + H(+). It participates in cofactor biosynthesis; FMN biosynthesis; FMN from riboflavin (CTP route): step 1/1. In terms of biological role, catalyzes the CTP-dependent phosphorylation of riboflavin (vitamin B2) to form flavin mononucleotide (FMN). In Thermoplasma volcanium (strain ATCC 51530 / DSM 4299 / JCM 9571 / NBRC 15438 / GSS1), this protein is Riboflavin kinase (ribK).